Consider the following 153-residue polypeptide: UPF0756 membrane protein Pjdr2_2290 (153 aa).

Transmembrane regions (helical) follow at residues 6 to 26 (LILV…IATA), 50 to 70 (LELG…SGKV), 75 to 95 (LIAA…AVAA), 111 to 131 (MVVG…GIPV), and 132 to 152 (GPLM…LMSG).

It belongs to the UPF0756 family.

The protein localises to the cell membrane. The polypeptide is UPF0756 membrane protein Pjdr2_2290 (Paenibacillus sp. (strain JDR-2)).